The following is a 432-amino-acid chain: MQLIDLVKNAKEATYKLQSLNTDIKNNALLEIAKKIEENKDKIFEANKKDLEYAQKLLDENKISKSMFNRLKLDENKLIDVVSGIRDVVKLEDPINKVLLETELDDNLLLKKISCPIGLIAVIFEARPDVISQISSLCIKSSNAVILKGGSEGENTNKAIYNIIEETLNNIKEFPKNSVNLVFTREDIKELLSMDKYIDLIIPRGGNSLVQYIKSNTNIPVLGHADGICHLYIDESADQEKALKICLDSKAQYPSACNAVETILVNKNIASEYLPKLYNLFKENEIKMNADAEVKKILTSSDIGEVKEWHFEYGDKEVSLKIVSDTEEAYNHINKYGSHHTDSIISENKDNIEKFMTFVDSANVYCNASTRFSDGFRYGFGAEVGISTNKTHARGPVGLEGLTIYKYKIFGNYQIVDDYVNHRASFKHKRIK.

This sequence belongs to the gamma-glutamyl phosphate reductase family.

The protein localises to the cytoplasm. It carries out the reaction L-glutamate 5-semialdehyde + phosphate + NADP(+) = L-glutamyl 5-phosphate + NADPH + H(+). The protein operates within amino-acid biosynthesis; L-proline biosynthesis; L-glutamate 5-semialdehyde from L-glutamate: step 2/2. Catalyzes the NADPH-dependent reduction of L-glutamate 5-phosphate into L-glutamate 5-semialdehyde and phosphate. The product spontaneously undergoes cyclization to form 1-pyrroline-5-carboxylate. The protein is Gamma-glutamyl phosphate reductase of Brachyspira hyodysenteriae (strain ATCC 49526 / WA1).